The following is a 377-amino-acid chain: UPF0754 membrane protein YheB (377 aa).

Helical transmembrane passes span 1 to 21 and 357 to 377; these read MGIA…GAVT and YLGG…VILF.

It belongs to the UPF0754 family.

It is found in the cell membrane. The polypeptide is UPF0754 membrane protein YheB (yheB) (Bacillus subtilis (strain 168)).